A 180-amino-acid chain; its full sequence is Large ribosomal subunit protein uL6 (180 aa).

A disordered region spans residues 158–180 (YSGKGISYKGEKIRRKEGKTASK).

The protein belongs to the universal ribosomal protein uL6 family. In terms of assembly, part of the 50S ribosomal subunit.

In terms of biological role, this protein binds to the 23S rRNA, and is important in its secondary structure. It is located near the subunit interface in the base of the L7/L12 stalk, and near the tRNA binding site of the peptidyltransferase center. The polypeptide is Large ribosomal subunit protein uL6 (Mycoplasmopsis synoviae (strain 53) (Mycoplasma synoviae)).